The primary structure comprises 228 residues: 2-C-methyl-D-erythritol 4-phosphate cytidylyltransferase (228 aa).

This sequence belongs to the IspD/TarI cytidylyltransferase family. IspD subfamily.

It catalyses the reaction 2-C-methyl-D-erythritol 4-phosphate + CTP + H(+) = 4-CDP-2-C-methyl-D-erythritol + diphosphate. Its pathway is isoprenoid biosynthesis; isopentenyl diphosphate biosynthesis via DXP pathway; isopentenyl diphosphate from 1-deoxy-D-xylulose 5-phosphate: step 2/6. In terms of biological role, catalyzes the formation of 4-diphosphocytidyl-2-C-methyl-D-erythritol from CTP and 2-C-methyl-D-erythritol 4-phosphate (MEP). This chain is 2-C-methyl-D-erythritol 4-phosphate cytidylyltransferase, found in Nostoc sp. (strain PCC 7120 / SAG 25.82 / UTEX 2576).